Consider the following 336-residue polypeptide: Cell division protein ZipA (336 aa).

The Periplasmic portion of the chain corresponds to 1 to 2 (ME). A helical membrane pass occupies residues 3-23 (LHILFFILAGLLIAVLIGFSL). Residues 24-336 (WSARREKSRI…SRQSYLARVS (313 aa)) lie on the Cytoplasmic side of the membrane. The disordered stretch occupies residues 57 to 76 (SLNPQSYAQTTGQHGETEAD). A compositionally biased stretch (polar residues) spans 59 to 70 (NPQSYAQTTGQH).

Belongs to the ZipA family. Interacts with FtsZ via their C-terminal domains.

It is found in the cell inner membrane. Its function is as follows. Essential cell division protein that stabilizes the FtsZ protofilaments by cross-linking them and that serves as a cytoplasmic membrane anchor for the Z ring. Also required for the recruitment to the septal ring of downstream cell division proteins. The chain is Cell division protein ZipA from Actinobacillus pleuropneumoniae serotype 7 (strain AP76).